A 232-amino-acid polypeptide reads, in one-letter code: NAD(P)H-quinone oxidoreductase subunit K 1 (232 aa).

Residues Cys-49, Cys-50, Cys-114, and Cys-145 each coordinate [4Fe-4S] cluster.

It belongs to the complex I 20 kDa subunit family. NDH-1 can be composed of about 15 different subunits; different subcomplexes with different compositions have been identified which probably have different functions. [4Fe-4S] cluster serves as cofactor.

It is found in the cellular thylakoid membrane. The catalysed reaction is a plastoquinone + NADH + (n+1) H(+)(in) = a plastoquinol + NAD(+) + n H(+)(out). It carries out the reaction a plastoquinone + NADPH + (n+1) H(+)(in) = a plastoquinol + NADP(+) + n H(+)(out). In terms of biological role, NDH-1 shuttles electrons from an unknown electron donor, via FMN and iron-sulfur (Fe-S) centers, to quinones in the respiratory and/or the photosynthetic chain. The immediate electron acceptor for the enzyme in this species is believed to be plastoquinone. Couples the redox reaction to proton translocation, and thus conserves the redox energy in a proton gradient. Cyanobacterial NDH-1 also plays a role in inorganic carbon-concentration. This chain is NAD(P)H-quinone oxidoreductase subunit K 1, found in Acaryochloris marina (strain MBIC 11017).